Consider the following 316-residue polypeptide: Pantothenate kinase (316 aa).

95 to 102 serves as a coordination point for ATP; it reads GSVAVGKS.

Belongs to the prokaryotic pantothenate kinase family.

Its subcellular location is the cytoplasm. It carries out the reaction (R)-pantothenate + ATP = (R)-4'-phosphopantothenate + ADP + H(+). The protein operates within cofactor biosynthesis; coenzyme A biosynthesis; CoA from (R)-pantothenate: step 1/5. This chain is Pantothenate kinase, found in Shigella sonnei (strain Ss046).